Here is a 166-residue protein sequence, read N- to C-terminus: Phosphopantetheine adenylyltransferase (166 aa).

Residue Ser11 coordinates substrate. ATP-binding positions include 11-12 (SF) and His19. The substrate site is built by Lys43, Ala76, and Arg90. Residues 91–93 (GLR), Glu101, and 126–132 (LQPISSS) contribute to the ATP site.

The protein belongs to the bacterial CoaD family. As to quaternary structure, homohexamer. Requires Mg(2+) as cofactor.

It localises to the cytoplasm. It carries out the reaction (R)-4'-phosphopantetheine + ATP + H(+) = 3'-dephospho-CoA + diphosphate. It participates in cofactor biosynthesis; coenzyme A biosynthesis; CoA from (R)-pantothenate: step 4/5. Functionally, reversibly transfers an adenylyl group from ATP to 4'-phosphopantetheine, yielding dephospho-CoA (dPCoA) and pyrophosphate. The sequence is that of Phosphopantetheine adenylyltransferase from Streptococcus equi subsp. zooepidemicus (strain MGCS10565).